Reading from the N-terminus, the 252-residue chain is Probable transcriptional regulatory protein DSY2470 (252 aa).

This sequence belongs to the TACO1 family.

It is found in the cytoplasm. The protein is Probable transcriptional regulatory protein DSY2470 of Desulfitobacterium hafniense (strain Y51).